We begin with the raw amino-acid sequence, 356 residues long: S-adenosylmethionine:tRNA ribosyltransferase-isomerase (356 aa).

This sequence belongs to the QueA family. In terms of assembly, monomer.

It localises to the cytoplasm. The enzyme catalyses 7-aminomethyl-7-carbaguanosine(34) in tRNA + S-adenosyl-L-methionine = epoxyqueuosine(34) in tRNA + adenine + L-methionine + 2 H(+). It participates in tRNA modification; tRNA-queuosine biosynthesis. Transfers and isomerizes the ribose moiety from AdoMet to the 7-aminomethyl group of 7-deazaguanine (preQ1-tRNA) to give epoxyqueuosine (oQ-tRNA). This Histophilus somni (strain 2336) (Haemophilus somnus) protein is S-adenosylmethionine:tRNA ribosyltransferase-isomerase.